The chain runs to 692 residues: Elongation factor G (692 aa).

One can recognise a tr-type G domain in the interval 8–282 (ENTRNIGIMA…AVIDYLPSPL (275 aa)). GTP contacts are provided by residues 17–24 (AHIDAGKT), 81–85 (DTPGH), and 135–138 (NKMD).

Belongs to the TRAFAC class translation factor GTPase superfamily. Classic translation factor GTPase family. EF-G/EF-2 subfamily.

It is found in the cytoplasm. In terms of biological role, catalyzes the GTP-dependent ribosomal translocation step during translation elongation. During this step, the ribosome changes from the pre-translocational (PRE) to the post-translocational (POST) state as the newly formed A-site-bound peptidyl-tRNA and P-site-bound deacylated tRNA move to the P and E sites, respectively. Catalyzes the coordinated movement of the two tRNA molecules, the mRNA and conformational changes in the ribosome. The protein is Elongation factor G of Bacillus cereus (strain ATCC 10987 / NRS 248).